A 310-amino-acid chain; its full sequence is MALVRERRQLNLRLPLPPISDRRFSTSSSSATTTTVAGCNGISACDLEKLNVLGCGNGGIVYKVRHKTTSEIYALKTVNGDMDPIFTRQLMREMEILRRTDSPYVVKCHGIFEKPVVGEVSILMEYMDGGTLESLRGGVTEQKLAGFAKQILKGLSYLHALKIVHRDIKPANLLLNSKNEVKIADFGVSKILVRSLDSCNSYVGTCAYMSPERFDSESSGGSSDIYAGDIWSFGLMMLELLVGHFPLLPPGQRPDWATLMCAVCFGEPPRAPEGCSEEFRSFVECCLRKDSSKRWTAPQLLAHPFLREDL.

A Protein kinase domain is found at 47–306; the sequence is LEKLNVLGCG…APQLLAHPFL (260 aa). ATP contacts are provided by residues 53-61 and Lys76; that span reads LGCGNGGIV. The active-site Proton acceptor is the Asp167. 2 positions are modified to phosphoserine: Ser195 and Ser201. Thr205 carries the phosphothreonine modification.

This sequence belongs to the protein kinase superfamily. STE Ser/Thr protein kinase family. MAP kinase kinase subfamily. Post-translationally, phosphorylation at Ser-195 and Ser-201 by MAP kinase kinase kinases positively regulates kinase activity. Autophosphorylated.

It localises to the cytoplasm. The protein resides in the nucleus. The enzyme catalyses L-seryl-[protein] + ATP = O-phospho-L-seryl-[protein] + ADP + H(+). It carries out the reaction L-threonyl-[protein] + ATP = O-phospho-L-threonyl-[protein] + ADP + H(+). The catalysed reaction is L-tyrosyl-[protein] + ATP = O-phospho-L-tyrosyl-[protein] + ADP + H(+). In terms of biological role, MKK9-MPK3/MPK6 module phosphorylates and activates EIN3, leading to the promotion of EIN3-mediated transcription in ethylene signaling. Autophosphorylates and also phosphorylates MPK3 and MPK6. Plays an important role in ethylene and camalexin biosynthesis and in salt stress response. MKK9-MPK6 module positively regulates leaf senescence. The chain is Mitogen-activated protein kinase kinase 9 (MKK9) from Arabidopsis thaliana (Mouse-ear cress).